Here is a 145-residue protein sequence, read N- to C-terminus: Immune protein Tsi4 (145 aa).

2 helical membrane-spanning segments follow: residues 9–29 (IGGL…LLAG) and 109–129 (ALWG…IVGF).

The protein resides in the membrane. Functionally, immunity protein that plays a role in preventing early activation of toxin Tse4. This Pseudomonas aeruginosa (strain ATCC 15692 / DSM 22644 / CIP 104116 / JCM 14847 / LMG 12228 / 1C / PRS 101 / PAO1) protein is Immune protein Tsi4.